The primary structure comprises 255 residues: NAD-dependent protein deacylase (255 aa).

Residues 1-252 form the Deacetylase sirtuin-type domain; the sequence is MPKLVVFSGA…AEIEQELEQF (252 aa). 9 to 28 contacts NAD(+); the sequence is GAGLSAESGLETFRDNGGLW. 2 residues coordinate substrate: tyrosine 53 and arginine 56. 103–106 contacts NAD(+); that stretch reads QNVD. Histidine 121 functions as the Proton acceptor in the catalytic mechanism. The Zn(2+) site is built by cysteine 129, cysteine 132, cysteine 148, and cysteine 151. NAD(+) is bound by residues 190-192, 218-220, and threonine 238; these read GTS and NLQ.

This sequence belongs to the sirtuin family. Class III subfamily. The cofactor is Zn(2+).

Its subcellular location is the cytoplasm. It catalyses the reaction N(6)-acetyl-L-lysyl-[protein] + NAD(+) + H2O = 2''-O-acetyl-ADP-D-ribose + nicotinamide + L-lysyl-[protein]. The catalysed reaction is N(6)-succinyl-L-lysyl-[protein] + NAD(+) + H2O = 2''-O-succinyl-ADP-D-ribose + nicotinamide + L-lysyl-[protein]. Its function is as follows. NAD-dependent lysine deacetylase and desuccinylase that specifically removes acetyl and succinyl groups on target proteins. Modulates the activities of several proteins which are inactive in their acylated form. The chain is NAD-dependent protein deacylase from Helicobacter hepaticus (strain ATCC 51449 / 3B1).